A 714-amino-acid chain; its full sequence is Protein BLISTER (714 aa).

4 disordered regions span residues 1-113 (MASA…VDFS), 219-261 (SSYL…KRSR), 288-325 (VTSS…ASDY), and 519-576 (MVQK…SSNT). Over residues 8-33 (RRQEDVEAGRRKLEQFRKRKAAEKAK) the composition is skewed to basic and acidic residues. 2 stretches are compositionally biased toward polar residues: residues 36–50 (SQNT…QSVI) and 58–74 (SISN…TSNE). The segment covering 92 to 102 (DGSKERSRQDD) has biased composition (basic and acidic residues). 4 stretches are compositionally biased toward polar residues: residues 219 to 253 (SSYL…SAKS), 288 to 297 (VTSSGSQLSG), 313 to 322 (NGPSSLTSGA), and 519 to 561 (MVQK…SSNQ). Residues 356-525 (NDDFTALEQH…LQTMVQKASS (170 aa)) are a coiled coil. Over residues 562–576 (ETDSTTLLESDSSNT) the composition is skewed to low complexity.

In terms of assembly, interacts with CLF. In terms of tissue distribution, expressed in root tips, emerging lateral roots, shoot apical meristem (SAM), vasculature of cotyledons, leaves, sepals and carpels.

Its subcellular location is the nucleus. The protein resides in the cytoplasm. In terms of biological role, is required for normal leaf, flower and seed development and controls cotyledon and leaf patterning by inhibiting premature differentiation. Regulates the expression of a subset of PcG target genes. Is required for the repression of the floral specific genes PI, SEP2, and SEP3, but also for the activation of FLC. Involved in response to cold. Involved in the regulation of COR15A, COR15B, BAM3 and AMY3 transcripts, and ascorbate levels in response to prolonged chilling temperatures. The chain is Protein BLISTER from Arabidopsis thaliana (Mouse-ear cress).